Reading from the N-terminus, the 82-residue chain is Chlorosome protein E (82 aa).

Residue H26 coordinates a bacteriochlorophyll c. Positions 55–82 (GSSGLKGSSPKYSGYATPSKEVKSRFEK) are disordered. Low complexity predominate over residues 59–69 (LKGSSPKYSGY).

Belongs to the BChl C/E-binding protein family.

The protein resides in the chlorosome. Its subcellular location is the chlorosome envelope. Its function is as follows. Component of the photosynthetic apparatus. The light harvesting B740 complex binds bacteriochlorophyll c. The sequence is that of Chlorosome protein E (csmE) from Chlorobaculum tepidum (strain ATCC 49652 / DSM 12025 / NBRC 103806 / TLS) (Chlorobium tepidum).